The primary structure comprises 374 residues: Tomoregulin-2 (374 aa).

The signal sequence occupies residues 1-39 (MVLWESPRQCSSWTLCEGFCWLLLLPVMLLIVARPVKLA). The Extracellular portion of the chain corresponds to 40 to 320 (AFPTSLSDCQ…VPGPVRFQYV (281 aa)). Residue asparagine 55 is glycosylated (N-linked (GlcNAc...) asparagine). Kazal-like domains are found at residues 90-137 (VCQF…SCAT) and 181-229 (VCNI…RCQD). Disulfide bonds link cysteine 91/cysteine 121, cysteine 95/cysteine 114, cysteine 103/cysteine 135, cysteine 182/cysteine 213, cysteine 186/cysteine 206, cysteine 195/cysteine 227, cysteine 265/cysteine 278, cysteine 273/cysteine 289, and cysteine 291/cysteine 300. The EGF-like domain occupies 261–301 (HHIPCPEHYNGFCMHGKCEHSINMQEPSCRCDAGYTGQHCE). Positions 303–320 (KDYSVLYVVPGPVRFQYV) are required for shedding. Residues 321-341 (LIAAVIGTIQIAVICVVVLCI) form a helical membrane-spanning segment. The Cytoplasmic portion of the chain corresponds to 342–374 (TRKCPRSNRIHRQKQNTGHYSSDNTTRASTRLI). Positions 353–374 (RQKQNTGHYSSDNTTRASTRLI) are disordered. The span at 356 to 374 (QNTGHYSSDNTTRASTRLI) shows a compositional bias: polar residues.

Belongs to the tomoregulin family. O-glycosylated; contains chondroitin sulfate glycosaminoglycans. In terms of processing, a soluble form (TMEFF2-ECD) is produced by proteolytic shedding. This shedding can be induced by phorbol ester or pro-inflammatory cytokines such as TNFalpha, and is mediated by a metalloproteinase ADAM.

Its subcellular location is the membrane. Its function is as follows. May be a survival factor for hippocampal and mesencephalic neurons. The shedded form may up-regulate cell proliferation. The sequence is that of Tomoregulin-2 (TMEFF2) from Bos taurus (Bovine).